Consider the following 414-residue polypeptide: METLQARFDAVQEQLLEIYEQDTSSLDVQITYWTLIRHEQALYYYARRQGILRLGIYQVPPTGVSEKKAKDAIKMTLFLKSLQKSEFAAQPWSLPETSLERFLAAPENTFKKRGQHVTVIYDKDSMNAMEYTLWTEIYAVDDNDQWHKYTSGVDYDGIYFTDAQGNKNYYVSFADDAALYSKLGHWEVQYENQVLSPPVTSSLPPGPNRRRGPQTRGHPRHKSASFRRSASSGSDTRDSRGRSRSPSSSRSRSRSRSRSPSGSHSRPRAPHVPDQETGRPPGGGGRRGSRDQQQGPGGPAPPSPGEVGTRSGPPETKAKGRLAELISAAYDPPVLLLQGCANTLKSFRRRTTQSYPHTFLCMSTSWTWASKTCTVKSGHRMLVAFVNSEQRTLFLATVKIPKGVTCLKGSFDGL.

The transactivation domain stretch occupies residues 1-202; it reads METLQARFDA…QVLSPPVTSS (202 aa). The interval 196–317 is disordered; that stretch reads SPPVTSSLPP…GTRSGPPETK (122 aa). Over residues 208–225 the composition is skewed to basic residues; it reads NRRRGPQTRGHPRHKSAS. The segment at 331 to 414 is DNA-binding domain; sequence DPPVLLLQGC…TCLKGSFDGL (84 aa).

The protein belongs to the papillomaviridae E2 protein family. Binds DNA as homodimer. Interacts with protein E1; this interaction greatly increases E1 DNA-binding activity. Interacts with protein L1; this interaction enhances E2-dependent replication and transcription activation. Interacts with protein L2; this interaction inhibits E2 transcriptional activity but not DNA replication function E2. Interacts with protein E7; this interaction inhibits E7 oncogenic activity. Interacts with host TAF1; this interaction modulates E2-dependent transcriptional regulation. Interacts with host BRD4; this interaction mediates E2 transcriptional activation function. Additionally, the interaction with host BRD4 on mitotic chromosomes mediates tethering of the viral genome. Interacts with host TOPBP1; this interaction is required for optimal viral DNA replication. Phosphorylated.

The protein localises to the host nucleus. In terms of biological role, plays a role in the initiation of viral DNA replication. A dimer of E2 interacts with a dimer of E1 in order to improve specificity of E1 DNA binding activity. Once the complex recognizes and binds DNA at specific sites, the E2 dimer is removed from DNA. E2 also regulates viral transcription through binding to the E2RE response element (5'-ACCNNNNNNGGT-3') present in multiple copies in the regulatory regions of the viral genome. Activates or represses transcription depending on E2RE's position with regards to proximal promoter elements including the TATA-box. Repression occurs by sterically hindering the assembly of the transcription initiation complex. This chain is Regulatory protein E2, found in Bovine papillomavirus type 3.